We begin with the raw amino-acid sequence, 480 residues long: Plant UBX domain-containing protein 10 (480 aa).

Disordered stretches follow at residues 47–78 (DASSSAVDGGGNNRDHDHNNATVTPDYPPRGI) and 335–383 (ADQA…AARV). Positions 330 to 389 (RAALEADQAREQQRQEEKERLEREAAEAERKLKEEEEARERAAREAEERQAARVRMRQEK) form a coiled coil. Positions 336-383 (DQAREQQRQEEKERLEREAAEAERKLKEEEEARERAAREAEERQAARV) are enriched in basic and acidic residues. The 79-residue stretch at 399 to 477 (KGPDVTQVLV…GLHPQASLFI (79 aa)) folds into the UBX domain.

In Arabidopsis thaliana (Mouse-ear cress), this protein is Plant UBX domain-containing protein 10.